The sequence spans 569 residues: MKKISRKEYVSMYGPTTGDRVRLGDTDLILEVEHDCTTYGEEIKFGGGKTIRDGMSQTNSPSSYELDLVLTNALIVDYTGIYKADIGIKDGKIAGIGKAGNKDMQDGVDNNLCVGPATEALAAEGLIVTAGGIDTHIHFISPQQIPTAFASGVTTMIGGGTGPADGTNATTITPGRANLKSMLRAAEEYAMNLGFLAKGNVSYEPSLRDQIEAGAIGFKIHEDWGSTPAAIHHCLNVADEYDVQVAIHTDTLNEAGCVEDTLEAIAGRTIHTFHTEGAGGGHAPDVIKMAGEFNILPASTNPTIPFTKNTEAEHMDMLMVCHHLDKSIKEDVQFADSRIRPQTIAAEDQLHDMGIFSITSSDSQAMGRVGEVITRTWQTADKNKKEFGRLKEEKGDNDNFRIKRYISKYTINPAIAHGISDYVGSVEVGKYADLVLWSPAFFGIKPNMIIKGGFIALSQMGDANASIPTPQPVYYREMFGHHGKNKFDTNITFVSQAAYKAGIKEELGLDRVVLPVKNCRNITKKDLKFNDVTAHIDVNPETYKVKVDGKEVTSKAADELSLAQLYNLF.

The 439-residue stretch at 131–569 (GGIDTHIHFI…LSLAQLYNLF (439 aa)) folds into the Urease domain. Residues His-136, His-138, and Lys-219 each contribute to the Ni(2+) site. Lys-219 bears the N6-carboxylysine mark. Position 221 (His-221) interacts with substrate. 2 residues coordinate Ni(2+): His-248 and His-274. The active-site Proton donor is the His-322. Asp-362 is a binding site for Ni(2+).

This sequence belongs to the metallo-dependent hydrolases superfamily. Urease alpha subunit family. In terms of assembly, heterohexamer of 3 UreA (alpha) and 3 UreB (beta) subunits. The cofactor is Ni cation. In terms of processing, carboxylation allows a single lysine to coordinate two nickel ions.

It is found in the cytoplasm. It carries out the reaction urea + 2 H2O + H(+) = hydrogencarbonate + 2 NH4(+). It functions in the pathway nitrogen metabolism; urea degradation; CO(2) and NH(3) from urea (urease route): step 1/1. This Helicobacter felis (strain ATCC 49179 / CCUG 28539 / NCTC 12436 / CS1) protein is Urease subunit beta.